Here is a 138-residue protein sequence, read N- to C-terminus: MATGRRVSRVAELIKREVSQMLLHSIKDDRVGSGMISVTAVDLSGDLQHAKIFVSIYGTDEARAETMAGLESATGYVRKQLGHRIHLRRTPEVIFCEDRSFEEGNQVLSLLHKLDHERQNKPAASTEKPPVGSLDADL.

Residues 117–138 (ERQNKPAASTEKPPVGSLDADL) form a disordered region.

Belongs to the RbfA family. In terms of assembly, monomer. Binds 30S ribosomal subunits, but not 50S ribosomal subunits or 70S ribosomes.

The protein resides in the cytoplasm. Functionally, one of several proteins that assist in the late maturation steps of the functional core of the 30S ribosomal subunit. Associates with free 30S ribosomal subunits (but not with 30S subunits that are part of 70S ribosomes or polysomes). Required for efficient processing of 16S rRNA. May interact with the 5'-terminal helix region of 16S rRNA. This Acaryochloris marina (strain MBIC 11017) protein is Ribosome-binding factor A.